The following is a 683-amino-acid chain: DNA ligase (683 aa).

Residues 35-39 (DADYD), 84-85 (SL), and glutamate 115 each bind NAD(+). The active-site N6-AMP-lysine intermediate is the lysine 117. Positions 138, 175, 293, and 317 each coordinate NAD(+). Cysteine 411, cysteine 414, cysteine 429, and cysteine 435 together coordinate Zn(2+). In terms of domain architecture, BRCT spans 598–683 (QTNSAVSGKT…LQNISTGAQQ (86 aa)).

This sequence belongs to the NAD-dependent DNA ligase family. LigA subfamily. It depends on Mg(2+) as a cofactor. Requires Mn(2+) as cofactor.

It catalyses the reaction NAD(+) + (deoxyribonucleotide)n-3'-hydroxyl + 5'-phospho-(deoxyribonucleotide)m = (deoxyribonucleotide)n+m + AMP + beta-nicotinamide D-nucleotide.. In terms of biological role, DNA ligase that catalyzes the formation of phosphodiester linkages between 5'-phosphoryl and 3'-hydroxyl groups in double-stranded DNA using NAD as a coenzyme and as the energy source for the reaction. It is essential for DNA replication and repair of damaged DNA. This chain is DNA ligase, found in Nitrosomonas eutropha (strain DSM 101675 / C91 / Nm57).